A 504-amino-acid polypeptide reads, in one-letter code: Maturase K (504 aa).

This sequence belongs to the intron maturase 2 family. MatK subfamily.

The protein resides in the plastid. The protein localises to the chloroplast. Its function is as follows. Usually encoded in the trnK tRNA gene intron. Probably assists in splicing its own and other chloroplast group II introns. In Quercus suber (Cork oak), this protein is Maturase K.